We begin with the raw amino-acid sequence, 71 residues long: MAVEKTNSSSSLAEVIDRILDKGIVVDAWVRVSLVGIELLAIEARIVIASVETYLKYAEAVGLTQSAAVPA.

The interval 12 to 22 (LAEVIDRILDK) is alpha helix 1. Positions 26–34 (VDAWVRVSL) are beta-strand 1. The interval 35–37 (VGI) is beta turn. Residues 38–46 (ELLAIEARI) are beta-strand 2. Residues 51-70 (VETYLKYAEAVGLTQSAAVP) form an alpha helix 2 region.

This sequence belongs to the gas vesicle GvpA family. In terms of assembly, the gas vesicle shell is 2 nm thick and consists of a single layer of this protein. It forms helical ribs nearly perpendicular to the long axis of the vesicle.

Its subcellular location is the gas vesicle shell. Gas vesicles are hollow, gas filled proteinaceous nanostructures found in some microorganisms. During planktonic growth they allow positioning of the organism at a favorable depth for light or nutrient acquisition. GvpA forms the protein shell. The sequence is that of Gas vesicle protein A from Microchaete diplosiphon (Fremyella diplosiphon).